The primary structure comprises 179 residues: Large ribosomal subunit protein uL6 (179 aa).

Belongs to the universal ribosomal protein uL6 family. Part of the 50S ribosomal subunit.

In terms of biological role, this protein binds to the 23S rRNA, and is important in its secondary structure. It is located near the subunit interface in the base of the L7/L12 stalk, and near the tRNA binding site of the peptidyltransferase center. This Mycobacterium ulcerans (strain Agy99) protein is Large ribosomal subunit protein uL6.